A 158-amino-acid chain; its full sequence is 6,7-dimethyl-8-ribityllumazine synthase (158 aa).

5-amino-6-(D-ribitylamino)uracil-binding positions include Phe24, 62-64 (CFE), and 86-88 (AVI). 91–92 (DT) contributes to the (2S)-2-hydroxy-3-oxobutyl phosphate binding site. His94 acts as the Proton donor in catalysis. Phe119 serves as a coordination point for 5-amino-6-(D-ribitylamino)uracil. Arg133 provides a ligand contact to (2S)-2-hydroxy-3-oxobutyl phosphate.

This sequence belongs to the DMRL synthase family.

The enzyme catalyses (2S)-2-hydroxy-3-oxobutyl phosphate + 5-amino-6-(D-ribitylamino)uracil = 6,7-dimethyl-8-(1-D-ribityl)lumazine + phosphate + 2 H2O + H(+). The protein operates within cofactor biosynthesis; riboflavin biosynthesis; riboflavin from 2-hydroxy-3-oxobutyl phosphate and 5-amino-6-(D-ribitylamino)uracil: step 1/2. Its function is as follows. Catalyzes the formation of 6,7-dimethyl-8-ribityllumazine by condensation of 5-amino-6-(D-ribitylamino)uracil with 3,4-dihydroxy-2-butanone 4-phosphate. This is the penultimate step in the biosynthesis of riboflavin. This is 6,7-dimethyl-8-ribityllumazine synthase from Picosynechococcus sp. (strain ATCC 27264 / PCC 7002 / PR-6) (Agmenellum quadruplicatum).